The sequence spans 387 residues: 3-hydroxy-D-aspartate aldolase (387 aa).

Lys-62 is subject to N6-(pyridoxal phosphate)lysine. Residue Gln-85 coordinates pyridoxal 5'-phosphate. Residues 199–228 (HGQLRGPQGQAGRRHCPGERGRGRAGGRGL) form a disordered region. Residues Thr-238, 256–257 (GS), and Tyr-265 each bind pyridoxal 5'-phosphate. Positions 355 and 357 each coordinate Mg(2+).

It belongs to the DSD1 family. As to quaternary structure, homodimer. It depends on pyridoxal 5'-phosphate as a cofactor. Requires Mn(2+) as cofactor. The cofactor is Mg(2+). Co(2+) is required as a cofactor.

It carries out the reaction (3S)-3-hydroxy-D-aspartate = glyoxylate + glycine. It catalyses the reaction (3R)-3-hydroxy-D-aspartate = glyoxylate + glycine. Catalyzes the condensation of glyoxylate and glycine into (2R,3S)-beta-hydroxyaspartate ((3S)-3-hydroxy-D-aspartate). Functions in glyoxylate assimilation via the beta-hydroxyaspartate cycle (BHAC). In vitro catalyzes the cleavage of both D-erythro- and D-threo-3-hydroxyaspartate to glycine and glyoxylate. Also acts on D-threonine, D-3-phenylserine and D-3-3,4-methylenedioxyphenylserine. This Paracoccus denitrificans protein is 3-hydroxy-D-aspartate aldolase (dhaa).